The sequence spans 453 residues: Dibenzothiophene-sulfone monooxygenase (453 aa).

FMN is bound by residues aspartate 59, threonine 106, histidine 156, tyrosine 160, and serine 231.

It belongs to the NtaA/SnaA/DszA monooxygenase family. In terms of assembly, homodimer.

The protein resides in the cytoplasm. It carries out the reaction dibenzothiophene 5,5-dioxide + FMNH2 + NADH + O2 = 2'-hydroxybiphenyl-2-sulfinate + FMN + NAD(+) + H2O + H(+). It participates in sulfur metabolism; dibenzothiophene degradation. Catalyzes the second step of the '4S' desulfurization pathway that removes covalently bound sulfur from dibenzothiophene (DBT) without breaking carbon-carbon bonds. Metabolizes DBT-sulfone (DBTO2 or DBT 5,5-dioxide) to 2-(2'-hydroxyphenyl)benzene sulphinate (HBPS). This chain is Dibenzothiophene-sulfone monooxygenase, found in Rhodococcus erythropolis (Arthrobacter picolinophilus).